Consider the following 256-residue polypeptide: Trans-aconitate 2-methyltransferase (256 aa).

This sequence belongs to the methyltransferase superfamily. Tam family.

The protein localises to the cytoplasm. It catalyses the reaction trans-aconitate + S-adenosyl-L-methionine = (E)-3-(methoxycarbonyl)pent-2-enedioate + S-adenosyl-L-homocysteine. In terms of biological role, catalyzes the S-adenosylmethionine monomethyl esterification of trans-aconitate. The chain is Trans-aconitate 2-methyltransferase from Agrobacterium fabrum (strain C58 / ATCC 33970) (Agrobacterium tumefaciens (strain C58)).